Here is a 398-residue protein sequence, read N- to C-terminus: Succinate--CoA ligase [ADP-forming] subunit beta (398 aa).

The region spanning 9-254 is the ATP-grasp domain; sequence KALLKSYGAP…TTEEDDKEIE (246 aa). Residues Lys-46, 53-55, Glu-109, Ala-112, and Glu-117 contribute to the ATP site; that span reads GRG. Positions 209 and 223 each coordinate Mg(2+). Substrate is bound by residues Asn-274 and 331–333; that span reads GIM.

Belongs to the succinate/malate CoA ligase beta subunit family. In terms of assembly, heterotetramer of two alpha and two beta subunits. Requires Mg(2+) as cofactor.

It catalyses the reaction succinate + ATP + CoA = succinyl-CoA + ADP + phosphate. The catalysed reaction is GTP + succinate + CoA = succinyl-CoA + GDP + phosphate. It participates in carbohydrate metabolism; tricarboxylic acid cycle; succinate from succinyl-CoA (ligase route): step 1/1. Functionally, succinyl-CoA synthetase functions in the citric acid cycle (TCA), coupling the hydrolysis of succinyl-CoA to the synthesis of either ATP or GTP and thus represents the only step of substrate-level phosphorylation in the TCA. The beta subunit provides nucleotide specificity of the enzyme and binds the substrate succinate, while the binding sites for coenzyme A and phosphate are found in the alpha subunit. This chain is Succinate--CoA ligase [ADP-forming] subunit beta, found in Rhizobium meliloti (strain 1021) (Ensifer meliloti).